The following is a 649-amino-acid chain: 1-deoxy-D-xylulose-5-phosphate synthase 1 (649 aa).

Residues H73 and S113–A115 contribute to the thiamine diphosphate site. D144 contributes to the Mg(2+) binding site. Thiamine diphosphate-binding positions include G145 to A146, N174, Y285, and E367. Position 174 (N174) interacts with Mg(2+). Positions L623 to A649 are disordered.

It belongs to the transketolase family. DXPS subfamily. Homodimer. It depends on Mg(2+) as a cofactor. Thiamine diphosphate serves as cofactor.

The enzyme catalyses D-glyceraldehyde 3-phosphate + pyruvate + H(+) = 1-deoxy-D-xylulose 5-phosphate + CO2. Its pathway is metabolic intermediate biosynthesis; 1-deoxy-D-xylulose 5-phosphate biosynthesis; 1-deoxy-D-xylulose 5-phosphate from D-glyceraldehyde 3-phosphate and pyruvate: step 1/1. Catalyzes the acyloin condensation reaction between C atoms 2 and 3 of pyruvate and glyceraldehyde 3-phosphate to yield 1-deoxy-D-xylulose-5-phosphate (DXP). This chain is 1-deoxy-D-xylulose-5-phosphate synthase 1, found in Kitasatospora griseola (Streptomyces griseolosporeus).